Consider the following 266-residue polypeptide: HLA class II histocompatibility antigen, DR beta 5 chain (266 aa).

A signal peptide spans 1–29; sequence MVCLKLPGGSYMAKLTVTLMVLSSPLALA. Positions 30 to 124 are beta-1; that stretch reads GDTRPRFLQQ…GESFTVQRRV (95 aa). Residues 30–227 are Extracellular-facing; the sequence is GDTRPRFLQQ…RAQSESAQSK (198 aa). Intrachain disulfides connect C44/C108 and C146/C202. N-linked (GlcNAc...) asparagine glycosylation is present at N48. The beta-2 stretch occupies residues 125–227; it reads EPKVTVYPAR…RAQSESAQSK (103 aa). Positions 126–214 constitute an Ig-like C1-type domain; it reads PKVTVYPART…EHPSVTSPLT (89 aa). The helical transmembrane segment at 228–248 threads the bilayer; the sequence is MLSGVGGFVLGLLFLGAGLFI. Residues 249-266 are Cytoplasmic-facing; the sequence is YFKNQKGHSGLHPTGLVS.

The protein belongs to the MHC class II family. In terms of assembly, heterodimer of an alpha and a beta subunit; also referred as MHC class II molecule. In the endoplasmic reticulum (ER) it forms a heterononamer; 3 MHC class II molecules bind to a CD74 homotrimer (also known as invariant chain or HLA class II histocompatibility antigen gamma chain). In the endosomal/lysosomal system; CD74 undergoes sequential degradation by various proteases; leaving a small fragment termed CLIP on each MHC class II molecule. MHC class II molecule interacts with HLA_DM, and HLA_DO in B-cells, in order to release CLIP and facilitate the binding of antigenic peptides. In terms of processing, ubiquitinated by MARCH1 and MARCH8 at Lys-254 leading to down-regulation of MHC class II.

It is found in the cell membrane. It localises to the endoplasmic reticulum membrane. Its subcellular location is the golgi apparatus. The protein localises to the trans-Golgi network membrane. The protein resides in the endosome membrane. It is found in the lysosome membrane. It localises to the late endosome membrane. In terms of biological role, binds peptides derived from antigens that access the endocytic route of antigen presenting cells (APC) and presents them on the cell surface for recognition by the CD4 T-cells. The peptide binding cleft accommodates peptides of 10-30 residues. The peptides presented by MHC class II molecules are generated mostly by degradation of proteins that access the endocytic route, where they are processed by lysosomal proteases and other hydrolases. Exogenous antigens that have been endocytosed by the APC are thus readily available for presentation via MHC II molecules, and for this reason this antigen presentation pathway is usually referred to as exogenous. As membrane proteins on their way to degradation in lysosomes as part of their normal turn-over are also contained in the endosomal/lysosomal compartments, exogenous antigens must compete with those derived from endogenous components. Autophagy is also a source of endogenous peptides, autophagosomes constitutively fuse with MHC class II loading compartments. In addition to APCs, other cells of the gastrointestinal tract, such as epithelial cells, express MHC class II molecules and CD74 and act as APCs, which is an unusual trait of the GI tract. To produce a MHC class II molecule that presents an antigen, three MHC class II molecules (heterodimers of an alpha and a beta chain) associate with a CD74 trimer in the ER to form a heterononamer. Soon after the entry of this complex into the endosomal/lysosomal system where antigen processing occurs, CD74 undergoes a sequential degradation by various proteases, including CTSS and CTSL, leaving a small fragment termed CLIP (class-II-associated invariant chain peptide). The removal of CLIP is facilitated by HLA-DM via direct binding to the alpha-beta-CLIP complex so that CLIP is released. HLA-DM stabilizes MHC class II molecules until primary high affinity antigenic peptides are bound. The MHC II molecule bound to a peptide is then transported to the cell membrane surface. In B-cells, the interaction between HLA-DM and MHC class II molecules is regulated by HLA-DO. Primary dendritic cells (DCs) also to express HLA-DO. Lysosomal microenvironment has been implicated in the regulation of antigen loading into MHC II molecules, increased acidification produces increased proteolysis and efficient peptide loading. The polypeptide is HLA class II histocompatibility antigen, DR beta 5 chain (Homo sapiens (Human)).